The primary structure comprises 200 residues: Protein Syd (200 aa).

Belongs to the Syd family.

It localises to the cell inner membrane. In terms of biological role, interacts with the SecY protein in vivo. May bind preferentially to an uncomplexed state of SecY, thus functioning either as a chelating agent for excess SecY in the cell or as a regulatory factor that negatively controls the translocase function. This Colwellia psychrerythraea (strain 34H / ATCC BAA-681) (Vibrio psychroerythus) protein is Protein Syd.